The primary structure comprises 74 residues: uncharacterized protein (74 aa).

The chain crosses the membrane as a helical span at residues 20–40 (IYSYTLLTLLVITLICYLIHI).

Belongs to the asfivirus KP93L family.

The protein resides in the host membrane. This is an uncharacterized protein from African swine fever virus (isolate Tick/South Africa/Pretoriuskop Pr4/1996) (ASFV).